A 395-amino-acid polypeptide reads, in one-letter code: Cyclic AMP-responsive element-binding protein 3-like protein 4 (395 aa).

At 1–295 (MDLGIPDLLD…QTSNKAAQTS (295 aa)) the chain is on the cytoplasmic side. Residues 82–108 (EASPGSDSGISEDPCHPDSPPAPRATS) are disordered. Positions 217 to 280 (VLKKVRRKIR…ISLVAQLRQL (64 aa)) constitute a bZIP domain. A basic motif region spans residues 219–248 (KKVRRKIRNKQSAQDSRRRKKEYIDGLESR). Residues 259–280 (LQKKVQELERHNISLVAQLRQL) form a leucine-zipper region. The chain crosses the membrane as a helical; Signal-anchor for type II membrane protein span at residues 296-316 (TCVLILLFSLALIILPSFSPF). Residues 317–395 (QSRPEAGSED…IRSVLHADEM (79 aa)) lie on the Lumenal side of the membrane. The interval 355–395 (RLREPPGAKDANGSTRTLLEKMGGKPRPSGRIRSVLHADEM) is disordered. Asn-366 carries N-linked (GlcNAc...) asparagine glycosylation.

Belongs to the bZIP family. ATF subfamily. In terms of assembly, binds DNA as a dimer. N-glycosylated in the C-terminal region. In terms of processing, controlled by regulated intramembrane proteolysis (RIP). Following ER stress a fragment containing the cytoplasmic transcription factor domain is released by proteolysis. The cleavage seems to be performed sequentially by site-1 and site-2 proteases (PS1 and PS2). PS1 cleavage may be suppressed by a determinant in the C-terminal region. As to expression, according to PubMed:11830526, exclusively expressed in the prostate. Expressed in breast and prostate cancer cell lines. Expressed in prostatic luminal epithelial cells (at protein level). Expression is significantly more abundant in prostate cancer than in benign prostatic tissue (prostatic hyperplasia). According to PubMed:12111373, also expressed in brain, pancreas and skeletal muscle, and at lower levels in small intestine, testis, leukocyte and thymus.

The protein localises to the endoplasmic reticulum membrane. The protein resides in the golgi apparatus membrane. Its subcellular location is the nucleus. Its function is as follows. Transcriptional activator that may play a role in the unfolded protein response. Binds to the UPR element (UPRE) but not to CRE element. Preferentially binds DNA with to the consensus sequence 5'-T[GT]ACGT[GA][GT]-3' and has transcriptional activation activity from UPRE. Binds to NF-kappa-B site and has transcriptional activation activity from NF-kappa-B-containing regulatory elements. The protein is Cyclic AMP-responsive element-binding protein 3-like protein 4 (CREB3L4) of Homo sapiens (Human).